A 151-amino-acid chain; its full sequence is uncharacterized protein (151 aa).

Residues 35–147 are a coiled coil; that stretch reads GIFENERQKL…RETLQESLED (113 aa).

This is an uncharacterized protein from Helicobacter hepaticus (strain ATCC 51449 / 3B1).